The primary structure comprises 98 residues: Major carboxysome shell protein CsoS1A (98 aa).

Positions 8–93 (ALGMIETRGL…VHSEVENILP (86 aa)) constitute a BMC domain.

This sequence belongs to the bacterial microcompartments protein family. CsoS1 subfamily. As to quaternary structure, homohexamer with a small central pore; the concave side is mostly positive electrostatic potential, whereas the convex side is mostly negative electrostatic potential. Forms a CsoS2-CsoS1-RuBisCO complex. Interacts with the N-terminus (residues 1-136) of RuBisCO (CbbL).

It is found in the carboxysome. In terms of biological role, the major shell protein of the carboxysome, a polyhedral inclusion where RuBisCO (ribulose bisphosphate carboxylase, ccbL-ccbS) is sequestered. Assembles into hexamers which make sheets that form the facets of the polyhedral carboxysome. The shell probably limits the diffusion of CO(2) into and out of the carboxysome. Molecular modeling shows the central pore of this protein is selectively permeable to anions such as HCO(3) rather than CO(2) or O(2). There are estimated to be 2970 CsoS1A/CsoS1C proteins per carboxysome (the proteins differ by only 1 residue). Unlike beta-carboxysomes, alpha-carboxysomes (Cb) can form without cargo protein. CsoS2 is essential for Cb formation and is also capable of targeting foreign proteins to the Cb. The Cb shell assembles with the aid of CsoS2; CsoS1A, CsoS1B and CsoS1C form the majority of the shell while CsoS4A and CsoS4B form vertices. CsoS1D forms pseudohexamers that probably control metabolite flux into and out of the shell. The protein is Major carboxysome shell protein CsoS1A of Halothiobacillus neapolitanus (strain ATCC 23641 / c2) (Thiobacillus neapolitanus).